The following is a 472-amino-acid chain: MSQNVYQFIDLQRVDPPKKPLKIRKIEFVEIYEPFSEGQAKAQADRCLSCGNPYCEWKCPVHNYIPNWLKLANEGRIFEAAELSHQTNTLPEVCGRVCPQDRLCEGSCTLNDEFGAVTIGNIERYINDKAFEMGWRPDMSGVKQTGKKVAIIGAGPAGLACADVLTRNGVKAVVFDRHPEIGGLLTFGIPAFKLEKEVMTRRREIFTGMGIEFKLNTEVGRDVQLDDLLSDYDAVFLGVGTYQSMRGGLENEDADGVYAALPFLIANTKQLMGFGETRDEPFVSMEGKRVVVLGGGDTAMDCVRTSVRQGAKHVTCAYRRDEENMPGSRREVKNAREEGVEFKFNVQPLGIEVNGNGKVSGVKMVRTEMGEPDAKGRRRAEIVAGSEHIVPADAVIMAFGFRPHNMEWLAKHSVELDSQGRIIAPEGSDNAFQTSNPKIFAGGDIVRGSDLVVTAIAEGRKAADGIMNWLEV.

One can recognise a 4Fe-4S ferredoxin-type domain in the interval 38-69 (GQAKAQADRCLSCGNPYCEWKCPVHNYIPNWL). Residues Cys-47, Cys-50, Cys-55, and Cys-59 each contribute to the [4Fe-4S] cluster site.

Aggregate of 4 catalytic active heterodimers, consisting of a large and a small subunit. The cofactor is [4Fe-4S] cluster.

The catalysed reaction is 2 L-glutamate + NADP(+) = L-glutamine + 2-oxoglutarate + NADPH + H(+). It functions in the pathway amino-acid biosynthesis; L-glutamate biosynthesis via GLT pathway; L-glutamate from 2-oxoglutarate and L-glutamine (NADP(+) route): step 1/1. It participates in energy metabolism; nitrogen metabolism. Catalyzes the conversion of L-glutamine and 2-oxoglutarate into two molecules of L-glutamate. This is Glutamate synthase [NADPH] small chain (gltD) from Escherichia coli (strain K12).